The chain runs to 282 residues: Probable porphobilinogen deaminase (282 aa).

C233 bears the S-(dipyrrolylmethanemethyl)cysteine mark.

Belongs to the HMBS family. Dipyrromethane is required as a cofactor.

The enzyme catalyses 4 porphobilinogen + H2O = hydroxymethylbilane + 4 NH4(+). The protein operates within porphyrin-containing compound metabolism; protoporphyrin-IX biosynthesis; coproporphyrinogen-III from 5-aminolevulinate: step 2/4. Its function is as follows. Tetrapolymerization of the monopyrrole PBG into the hydroxymethylbilane pre-uroporphyrinogen in several discrete steps. This Picrophilus torridus (strain ATCC 700027 / DSM 9790 / JCM 10055 / NBRC 100828 / KAW 2/3) protein is Probable porphobilinogen deaminase.